A 229-amino-acid polypeptide reads, in one-letter code: C-&gt;U-editing enzyme APOBEC-1 (229 aa).

The region spanning 10–134 (VDPTLRRRIE…QRNRQGLRDL (125 aa)) is the CMP/dCMP-type deaminase domain. Residue H61 participates in Zn(2+) binding. The active-site Proton donor is E63. Zn(2+) contacts are provided by C93 and C96.

It belongs to the cytidine and deoxycytidylate deaminase family. As to quaternary structure, homodimer. Interacts with A1CF; form an mRNA editing complex. Interacts with RBM47; form an mRNA editing complex. Found in a complex with CELF2/CUGBP2 and A1CF. Interacts with HNRPAB. Interacts with SYNCRIP. It depends on Zn(2+) as a cofactor. As to expression, expressed in the spleen. Expressed at lower level in the kidney, testis, lung, brain and liver.

The protein localises to the cytoplasm. Its subcellular location is the nucleus. The catalysed reaction is a cytidine in mRNA + H2O + H(+) = a uridine in mRNA + NH4(+). It catalyses the reaction cytidine(6666) in apoB mRNA + H2O + H(+) = uridine(6666) in apoB mRNA + NH4(+). Functionally, cytidine deaminase catalyzing the cytidine to uridine postranscriptional editing of a variety of mRNAs. Form complexes with cofactors that confer differential editing activity and selectivity. Responsible for the postranscriptional editing of a CAA codon for Gln to a UAA codon for stop in the apolipoprotein B mRNA. Also involved in CGA (Arg) to UGA (Stop) editing in the NF1 mRNA. May also play a role in the epigenetic regulation of gene expression by participating in DNA demethylation. The protein is C-&gt;U-editing enzyme APOBEC-1 of Mus musculus (Mouse).